The chain runs to 437 residues: Nicotinate phosphoribosyltransferase (437 aa).

Residue histidine 231 is modified to Phosphohistidine; by autocatalysis.

The protein belongs to the NAPRTase family. Post-translationally, transiently phosphorylated on a His residue during the reaction cycle. Phosphorylation strongly increases the affinity for substrates and increases the rate of nicotinate D-ribonucleotide production. Dephosphorylation regenerates the low-affinity form of the enzyme, leading to product release.

It catalyses the reaction nicotinate + 5-phospho-alpha-D-ribose 1-diphosphate + ATP + H2O = nicotinate beta-D-ribonucleotide + ADP + phosphate + diphosphate. Its pathway is cofactor biosynthesis; NAD(+) biosynthesis; nicotinate D-ribonucleotide from nicotinate: step 1/1. Its function is as follows. Catalyzes the synthesis of beta-nicotinate D-ribonucleotide from nicotinate and 5-phospho-D-ribose 1-phosphate at the expense of ATP. The chain is Nicotinate phosphoribosyltransferase from Vibrio vulnificus (strain YJ016).